Here is a 204-residue protein sequence, read N- to C-terminus: Imidazole glycerol phosphate synthase subunit HisH (204 aa).

Residues 5–204 (KVVIIDTGCA…AKLIQNFLEL (200 aa)) enclose the Glutamine amidotransferase type-1 domain. Cysteine 80 acts as the Nucleophile in catalysis. Residues histidine 186 and glutamate 188 contribute to the active site.

In terms of assembly, heterodimer of HisH and HisF.

It localises to the cytoplasm. It catalyses the reaction 5-[(5-phospho-1-deoxy-D-ribulos-1-ylimino)methylamino]-1-(5-phospho-beta-D-ribosyl)imidazole-4-carboxamide + L-glutamine = D-erythro-1-(imidazol-4-yl)glycerol 3-phosphate + 5-amino-1-(5-phospho-beta-D-ribosyl)imidazole-4-carboxamide + L-glutamate + H(+). The catalysed reaction is L-glutamine + H2O = L-glutamate + NH4(+). The protein operates within amino-acid biosynthesis; L-histidine biosynthesis; L-histidine from 5-phospho-alpha-D-ribose 1-diphosphate: step 5/9. In terms of biological role, IGPS catalyzes the conversion of PRFAR and glutamine to IGP, AICAR and glutamate. The HisH subunit catalyzes the hydrolysis of glutamine to glutamate and ammonia as part of the synthesis of IGP and AICAR. The resulting ammonia molecule is channeled to the active site of HisF. The polypeptide is Imidazole glycerol phosphate synthase subunit HisH (Vibrio parahaemolyticus serotype O3:K6 (strain RIMD 2210633)).